The sequence spans 202 residues: Dephospho-CoA kinase (202 aa).

One can recognise a DPCK domain in the interval 6–202 (KISVTGDPSS…QCFKALKGTI (197 aa)). 14–19 (SSGKTE) serves as a coordination point for ATP.

It belongs to the CoaE family.

The protein localises to the cytoplasm. The enzyme catalyses 3'-dephospho-CoA + ATP = ADP + CoA + H(+). Its pathway is cofactor biosynthesis; coenzyme A biosynthesis; CoA from (R)-pantothenate: step 5/5. Functionally, catalyzes the phosphorylation of the 3'-hydroxyl group of dephosphocoenzyme A to form coenzyme A. The polypeptide is Dephospho-CoA kinase (Chlamydia trachomatis serovar A (strain ATCC VR-571B / DSM 19440 / HAR-13)).